A 490-amino-acid chain; its full sequence is (21S)-21-acetyl-1-hydroxy-apo-melianone synthase CYP88A164 (490 aa).

The helical transmembrane segment at 4-24 threads the bilayer; the sequence is DLLWLILAIVVGTYVVLFGFL. Cys-438 is a heme binding site.

The protein belongs to the cytochrome P450 family. Heme serves as cofactor. In terms of tissue distribution, mainly expressed in petioles and, to a lower extent, in roots.

Its subcellular location is the membrane. The catalysed reaction is (21S)-21-acetoxyl-apo-melianone + reduced [NADPH--hemoprotein reductase] + O2 = (21S)-21-acetyl-1-hydroxy-apo-melianone + oxidized [NADPH--hemoprotein reductase] + H2O + H(+). It participates in secondary metabolite biosynthesis; terpenoid biosynthesis. Functionally, monooxygenase involved in the biosynthesis of limonoids triterpene natural products such as azadirachtin, an antifeedant widely used as bioinsecticide, and possessing many medicinal applications including anti-tumoral, anti-malarial, anti-rheumatic, antibacterial, anti-inflammatory, anti-pyretic and diuretic effects. Catalyzes the conversion of (21S)-21-acetoxyl-apo-melianone to (21S)-21-acetyl-1-hydroxy-apo-melianone. The chain is (21S)-21-acetyl-1-hydroxy-apo-melianone synthase CYP88A164 from Melia azedarach (Chinaberry tree).